The chain runs to 444 residues: Proline--tRNA ligase (444 aa).

The protein belongs to the class-II aminoacyl-tRNA synthetase family. ProS type 2 subfamily. As to quaternary structure, homodimer.

The protein localises to the cytoplasm. The enzyme catalyses tRNA(Pro) + L-proline + ATP = L-prolyl-tRNA(Pro) + AMP + diphosphate. Its function is as follows. Catalyzes the attachment of proline to tRNA(Pro) in a two-step reaction: proline is first activated by ATP to form Pro-AMP and then transferred to the acceptor end of tRNA(Pro). The sequence is that of Proline--tRNA ligase from Methylobacterium sp. (strain 4-46).